A 495-amino-acid polypeptide reads, in one-letter code: UDP-N-acetylmuramoyl-L-alanyl-D-glutamate--2,6-diaminopimelate ligase (495 aa).

Residues Leu27, Ser29, and His44–Thr46 each bind UDP-N-acetyl-alpha-D-muramoyl-L-alanyl-D-glutamate. An ATP-binding site is contributed by Gly116–Thr122. UDP-N-acetyl-alpha-D-muramoyl-L-alanyl-D-glutamate contacts are provided by residues Asn157, Thr158–Thr159, Ser185, Gln191, and Arg193. Lys225 carries the N6-carboxylysine modification. Meso-2,6-diaminopimelate contacts are provided by residues Arg390, Asp414–Arg417, Gly465, and Glu469. A Meso-diaminopimelate recognition motif motif is present at residues Asp414–Arg417.

The protein belongs to the MurCDEF family. MurE subfamily. Mg(2+) is required as a cofactor. Carboxylation is probably crucial for Mg(2+) binding and, consequently, for the gamma-phosphate positioning of ATP.

It localises to the cytoplasm. It carries out the reaction UDP-N-acetyl-alpha-D-muramoyl-L-alanyl-D-glutamate + meso-2,6-diaminopimelate + ATP = UDP-N-acetyl-alpha-D-muramoyl-L-alanyl-gamma-D-glutamyl-meso-2,6-diaminopimelate + ADP + phosphate + H(+). It participates in cell wall biogenesis; peptidoglycan biosynthesis. Its function is as follows. Catalyzes the addition of meso-diaminopimelic acid to the nucleotide precursor UDP-N-acetylmuramoyl-L-alanyl-D-glutamate (UMAG) in the biosynthesis of bacterial cell-wall peptidoglycan. This is UDP-N-acetylmuramoyl-L-alanyl-D-glutamate--2,6-diaminopimelate ligase from Sodalis glossinidius (strain morsitans).